The sequence spans 211 residues: Uridine kinase (211 aa).

13–20 (GGSGSGKT) is a binding site for ATP.

This sequence belongs to the uridine kinase family.

It localises to the cytoplasm. The catalysed reaction is uridine + ATP = UMP + ADP + H(+). It catalyses the reaction cytidine + ATP = CMP + ADP + H(+). The protein operates within pyrimidine metabolism; CTP biosynthesis via salvage pathway; CTP from cytidine: step 1/3. It functions in the pathway pyrimidine metabolism; UMP biosynthesis via salvage pathway; UMP from uridine: step 1/1. The chain is Uridine kinase from Lactobacillus johnsonii (strain CNCM I-12250 / La1 / NCC 533).